Reading from the N-terminus, the 458-residue chain is Alpha-2C adrenergic receptor (458 aa).

Over 1 to 51 (MASPALAAALAAAAAEGPNGSDAGEWGSGGGANASGTDWGPPPGQYSAGAV) the chain is Extracellular. 2 N-linked (GlcNAc...) asparagine glycosylation sites follow: Asn19 and Asn33. A helical membrane pass occupies residues 52-76 (AGLAAVVGFLIVFTVVGNVLVVIAV). At 77–88 (LTSRALRAPQNL) the chain is on the cytoplasmic side. A helical transmembrane segment spans residues 89-114 (FLVSLASADILVATLVMPFSLANELM). Residues 115–124 (AYWYFGQVWC) lie on the Extracellular side of the membrane. A disulfide bridge links Cys124 with Cys202. The helical transmembrane segment at 125-147 (GVYLALDVLFCTSSIVHLCAISL) threads the bilayer. The Cytoplasmic portion of the chain corresponds to 148–168 (DRYWSVTQAVEYNLKRTPRRV). The chain crosses the membrane as a helical span at residues 169-191 (KATIVAVWLISAVISFPPLVSFY). Topologically, residues 192–207 (RRPDGAAYPQCGLNDE) are extracellular. A helical transmembrane segment spans residues 208–231 (TWYILSSCIGSFFAPCLIMGLVYA). Residues 232–379 (RIYRVAKLRT…QAREKRFTFV (148 aa)) are Cytoplasmic-facing. The segment at 245–343 (SEKRGPAGPD…SPGPGGRLSR (99 aa)) is disordered. Residues 291–303 (RRRRRGALRRGGR) are compositionally biased toward basic residues. Residues 380-403 (LAVVMGVFVLCWFPFFFSYSLYGI) form a helical membrane-spanning segment. Topologically, residues 404–416 (CREACQLPEPLFK) are extracellular. The helical transmembrane segment at 417-437 (FFFWIGYCNSSLNPVIYTVFN) threads the bilayer. The Cytoplasmic segment spans residues 438–458 (QDFRRSFKHILFRRRRRGFRQ).

The protein belongs to the G-protein coupled receptor 1 family. Adrenergic receptor subfamily. ADRA2C sub-subfamily.

The protein localises to the cell membrane. Functionally, alpha-2 adrenergic receptors mediate the catecholamine-induced inhibition of adenylate cyclase through the action of G proteins. This is Alpha-2C adrenergic receptor (Adra2c) from Rattus norvegicus (Rat).